Reading from the N-terminus, the 240-residue chain is Putative glycyl-radical enzyme activating enzyme MJ1227 (240 aa).

The 219-residue stretch at 14–232 (IDYPKKASAV…KKYIDNVVIR (219 aa)) folds into the Radical SAM core domain. [4Fe-4S] cluster contacts are provided by cysteine 29, cysteine 33, and cysteine 36. S-adenosyl-L-methionine-binding positions include 35 to 37 (YCH), glycine 71, and 126 to 128 (FDK).

This sequence belongs to the organic radical-activating enzymes family. The cofactor is [4Fe-4S] cluster.

The enzyme catalyses glycyl-[protein] + reduced [flavodoxin] + S-adenosyl-L-methionine = glycin-2-yl radical-[protein] + semiquinone [flavodoxin] + 5'-deoxyadenosine + L-methionine + H(+). In Methanocaldococcus jannaschii (strain ATCC 43067 / DSM 2661 / JAL-1 / JCM 10045 / NBRC 100440) (Methanococcus jannaschii), this protein is Putative glycyl-radical enzyme activating enzyme MJ1227.